The primary structure comprises 180 residues: V-type proton ATPase subunit c''1 (180 aa).

At M1–S26 the chain is on the lumenal side. Residues A27–I47 form a helical membrane-spanning segment. Residues T48 to N66 are Cytoplasmic-facing. A helical transmembrane segment spans residues L67–L87. Residues Q88–A110 are Lumenal-facing. Residues I111–I131 form a helical membrane-spanning segment. The Cytoplasmic segment spans residues I132–K149. The helical transmembrane segment at I150–I170 threads the bilayer. Residues M171–K180 are Lumenal-facing.

This sequence belongs to the V-ATPase proteolipid subunit family. V-ATPase is a heteromultimeric enzyme composed of a peripheral catalytic V1 complex (components A to H) attached to an integral membrane V0 proton pore complex (components: a, c, c'', d and e). The proteolipid components c and c'' are present as a hexameric ring that forms the proton-conducting pore. In terms of tissue distribution, preferentially expressed in roots.

It is found in the endoplasmic reticulum membrane. It localises to the golgi apparatus membrane. Functionally, proton-conducting pore forming subunit of the membrane integral V0 complex of vacuolar ATPase. V-ATPase is responsible for acidifying a variety of intracellular compartments in eukaryotic cells. The polypeptide is V-type proton ATPase subunit c''1 (VHA-c''1) (Arabidopsis thaliana (Mouse-ear cress)).